The chain runs to 377 residues: NIF3-like protein 1 (377 aa).

An N6-acetyllysine modification is found at K109. The segment at 244–377 (LLLHTGMGRL…ETDRDPLQVV (134 aa)) is mediates interaction with COPS2. Residue T255 is modified to Phosphothreonine. S259 bears the Phosphoserine mark.

This sequence belongs to the GTP cyclohydrolase I type 2/NIF3 family. In terms of assembly, homodimer. Interacts with COPS2. Interacts with THOC7.

It is found in the cytoplasm. The protein resides in the nucleus. May function as a transcriptional corepressor through its interaction with COPS2, negatively regulating the expression of genes involved in neuronal differentiation. In Homo sapiens (Human), this protein is NIF3-like protein 1.